A 303-amino-acid chain; its full sequence is Glucosyl-3-phosphoglycerate synthase (303 aa).

UDP-alpha-D-glucose-binding positions include 35-39 (PALNE), serine 66, lysine 99, and 119-120 (DS). Position 121 (aspartate 121) interacts with Mn(2+). Position 166–169 (166–169 (GRVT)) interacts with (2R)-3-phosphoglycerate. UDP-alpha-D-glucose is bound by residues 211-214 (YGVE) and 238-243 (RAHRNR). Histidine 240 contributes to the Mn(2+) binding site. (2R)-3-phosphoglycerate is bound at residue asparagine 242.

Belongs to the glycosyltransferase 2 family. Homotrimer. It depends on Mg(2+) as a cofactor. Mn(2+) serves as cofactor.

It catalyses the reaction an NDP-alpha-D-glucose + (2R)-3-phosphoglycerate = (2R)-2-O-(alpha-D-glucopyranosyl)-3-phospho-glycerate + a ribonucleoside 5'-diphosphate + H(+). The enzyme catalyses (2R)-3-phosphoglycerate + UDP-alpha-D-glucose = (2R)-2-O-(alpha-D-glucopyranosyl)-3-phospho-glycerate + UDP + H(+). The catalysed reaction is ADP-alpha-D-glucose + (2R)-3-phosphoglycerate = (2R)-2-O-(alpha-D-glucopyranosyl)-3-phospho-glycerate + ADP + H(+). It carries out the reaction GDP-D-glucose + (2R)-3-phosphoglycerate = (2R)-2-O-(alpha-D-glucopyranosyl)-3-phospho-glycerate + GDP + H(+). Functionally, involved in the biosynthesis of 6-O-methylglucose lipopolysaccarides (MGLPs). Catalyzes the transfer of the glucose moiety from a nuleotide sugar such as UDP-alpha-D-glucose to the position 2 of 3-phospho-D-glycerate (3-PGA) to form glucosyl-3-phosphoglycerate (GPG). It can use UDP-glucose, ADP-glucose and GDP-glucose as sugar donor substrates with decreasing affinity and with 3-PGA as an acceptor. D-glycerate can only be an acceptor with ADP-glucose and at a very low rate. This chain is Glucosyl-3-phosphoglycerate synthase (gpgS), found in Mycolicibacterium smegmatis (strain ATCC 700084 / mc(2)155) (Mycobacterium smegmatis).